The following is a 190-amino-acid chain: Small ribosomal subunit protein uS4 (190 aa).

The 73-residue stretch at 106 to 178 folds into the S4 RNA-binding domain; the sequence is RRLQTVVFKH…GRVKRVKRNA (73 aa). The interval 166 to 190 is disordered; the sequence is GRPGRVKRVKRNAAKKGSGGGDDDE. Basic residues predominate over residues 169–179; it reads GRVKRVKRNAA.

Belongs to the universal ribosomal protein uS4 family.

This chain is Small ribosomal subunit protein uS4, found in Trypanosoma brucei brucei.